We begin with the raw amino-acid sequence, 1318 residues long: Uromodulin-like 1 (1318 aa).

An N-terminal signal peptide occupies residues 1–21; that stretch reads MLRTSGLALLALVSAVGPSQA. Topologically, residues 22 to 1272 are extracellular; the sequence is SGFTEKGLSL…HAEAGLGAGY (1251 aa). One can recognise an EMI domain in the interval 33-106; sequence GYQLCSHRVT…YEQLGLYCVL (74 aa). 3 cysteine pairs are disulfide-bonded: Cys-37-Cys-94, Cys-61-Cys-70, and Cys-93-Cys-104. An N-linked (GlcNAc...) asparagine glycan is attached at Asn-89. N-linked (GlcNAc...) asparagine glycosylation occurs at Asn-109. The 45-residue stretch at 114–158 folds into the WAP domain; sequence FTSRPGACPAEGPEPSTSPCSLDIDCPGLEKCCPWSGGRYCMAPA. N-linked (GlcNAc...) asparagine glycosylation is present at Asn-172. Residues 264–313 enclose the EGF-like 1; calcium-binding domain; the sequence is DVNECFYEELNACSGRELCANLEGSYWCVCHQEAPATSPRKLNLEWEDCP. The Fibronectin type-III 1 domain occupies 314 to 398; sequence PVSDYVVLNV…TTLTIKTNAQ (85 aa). N-linked (GlcNAc...) asparagine glycans are attached at residues Asn-322, Asn-335, and Asn-417. In terms of domain architecture, SEA 1 spans 396-510; sequence NAQVFEVTIK…QGTRVQDWDE (115 aa). Residues 507 to 552 enclose the EGF-like 2; calcium-binding domain; the sequence is DWDECVDSAEHDCSPAAWCINLEGSYTCQCRTTRDATPSRAGRACE. 3 disulfide bridges follow: Cys-511/Cys-525, Cys-519/Cys-534, and Cys-536/Cys-551. Asn-585 is a glycosylation site (N-linked (GlcNAc...) asparagine). The tract at residues 593 to 655 is disordered; that stretch reads GYPQGTPAAG…PSPTEDPTGH (63 aa). The 90-residue stretch at 702–791 folds into the Fibronectin type-III 2 domain; sequence VPVSIGRIMV…HLKVRTAARK (90 aa). Asn-713 carries an N-linked (GlcNAc...) asparagine glycan. The region spanning 788–900 is the SEA 2 domain; that stretch reads AARKLIGKVR…GDTFIQDYDE (113 aa). An EGF-like 3; calcium-binding domain is found at 897–938; it reads DYDECERKEDDCVPGTSCRNTLGSFTCSCEGGAPDFPVEYSE. 2 disulfide bridges follow: Cys-901-Cys-914 and Cys-908-Cys-923. The segment at 938–957 is disordered; sequence ERPCEGDSPGNETWATSPER. N-linked (GlcNAc...) asparagine glycosylation is found at Asn-984 and Asn-1050. The region spanning 992–1235 is the ZP domain; sequence LCEIEKVVVA…ATCKINCNNF (244 aa). Cys-1157 and Cys-1215 are oxidised to a cystine. A helical membrane pass occupies residues 1273-1293; that stretch reads VVLIVVAIFVLVAGTATLLIV. Residues 1294–1318 are Cytoplasmic-facing; the sequence is RYQRMNGRYNFKIQSNNFSYQVFYE.

Isoform 4 is expressed at low level in kidney, testis and fetal thymus. Isoform 3 is expressed at low level in prostate, testis and fetal thymus.

Its subcellular location is the cell membrane. It localises to the cytoplasm. The sequence is that of Uromodulin-like 1 (UMODL1) from Homo sapiens (Human).